The following is a 61-amino-acid chain: Short neurotoxin 2 (61 aa).

4 disulfides stabilise this stretch: cysteine 3-cysteine 23, cysteine 17-cysteine 40, cysteine 42-cysteine 53, and cysteine 54-cysteine 59.

Belongs to the three-finger toxin family. Short-chain subfamily. Type I alpha-neurotoxin sub-subfamily. Expressed by the venom gland.

The protein localises to the secreted. Its function is as follows. Binds to muscle nicotinic acetylcholine receptor (nAChR) and inhibit acetylcholine from binding to the receptor, thereby impairing neuromuscular transmission. The polypeptide is Short neurotoxin 2 (Naja annulifera (Banded Egyptian cobra)).